An 803-amino-acid chain; its full sequence is Volume-regulated anion channel subunit LRRC8B (803 aa).

The Cytoplasmic portion of the chain corresponds to 1–25 (MITLTELKCLADAQSSYHILKPWWD). Residues 26-46 (VFWYYITLIMLLVAVLAGALQ) traverse the membrane as a helical segment. Topologically, residues 47–119 (LTQSRVLCCL…YEKQLHWFAK (73 aa)) are extracellular. Cystine bridges form between Cys55/Cys304 and Cys109/Cys289. N-linked (GlcNAc...) asparagine glycosylation is present at Asn78. The chain crosses the membrane as a helical span at residues 120–140 (FFPYLVLLHTLIFAACSNFWL). Over 141–261 (HYPSTSSRLE…DIIYRVYLKQ (121 aa)) the chain is Cytoplasmic. Phosphoserine occurs at positions 186 and 196. The chain crosses the membrane as a helical span at residues 262–282 (IIVKVILFVLIITYVPYFLTH). The Extracellular segment spans residues 283–307 (ITLEIDCSVDVQAFTGYKRYQCVYS). Residues 308-328 (LAEIFKVLASFYVILVILYGL) traverse the membrane as a helical segment. At 329–803 (TSSYSLWWML…ERLQTCLDKC (475 aa)) the chain is on the cytoplasmic side. 13 LRR repeats span residues 464 to 486 (NLKE…AFLE), 488 to 509 (NLKI…VFHL), 511 to 532 (NLKE…MQLE), 539 to 559 (NLRT…VTDL), 562 to 582 (SLQK…NNLK), 586 to 607 (NLKS…IFSL), 609 to 630 (NLHE…ISFQ), 634 to 655 (NLSC…IGAL), 657 to 678 (NLEQ…LFLC), 680 to 701 (KLHY…IQYL), 703 to 724 (NLQY…LFQC), 726 to 747 (KLQC…VGEL), and 749 to 771 (NLTH…EGCQ).

This sequence belongs to the LRRC8 family. As to quaternary structure, heterohexamer; oligomerizes with other LRRC8 proteins (LRRC8A, LRRC8C, LRRC8D and/or LRRC8E) to form a heterohexamer. In vivo, the subunit composition may depend primarily on expression levels, and heterooligomeric channels containing various proportions of the different LRRC8 proteins may coexist.

Its subcellular location is the cell membrane. The protein localises to the endoplasmic reticulum membrane. It carries out the reaction chloride(in) = chloride(out). The catalysed reaction is iodide(out) = iodide(in). It catalyses the reaction taurine(out) = taurine(in). Its function is as follows. Non-essential component of the volume-regulated anion channel (VRAC, also named VSOAC channel), an anion channel required to maintain a constant cell volume in response to extracellular or intracellular osmotic changes. The VRAC channel conducts iodide better than chloride and can also conduct organic osmolytes like taurine. Channel activity requires LRRC8A plus at least one other family member (LRRC8B, LRRC8C, LRRC8D or LRRC8E); channel characteristics depend on the precise subunit composition. This Homo sapiens (Human) protein is Volume-regulated anion channel subunit LRRC8B.